We begin with the raw amino-acid sequence, 224 residues long: Peroxiredoxin-6 (224 aa).

The Thioredoxin domain maps to 5-169 (LLLGDEAPNF…ILRVIISLQL (165 aa)). Residues 31-40 (DSWGILFSHP) are required and sufficient for targeting to lysosomes and lamellar bodies. At threonine 44 the chain carries Phosphothreonine. Cysteine 47 (cysteine sulfenic acid (-SOH) intermediate; for peroxidase activity) is an active-site residue. N6-acetyllysine is present on lysine 63. A Phosphotyrosine modification is found at tyrosine 89. Catalysis depends on aspartate 140, which acts as the For phospholipase activity. Threonine 177 is subject to Phosphothreonine; by MAPK. At lysine 209 the chain carries N6-acetyllysine; alternate. An N6-succinyllysine; alternate modification is found at lysine 209.

Belongs to the peroxiredoxin family. Prx6 subfamily. As to quaternary structure, homodimer. Interacts with GSTP1; mediates PRDX6 glutathionylation and regeneration. Interacts with APEX1. Interacts with STH. May interact with FAM168B. May interact with HTR2A. Post-translationally, irreversibly inactivated by overoxidation of Cys-47 to sulfinic acid (Cys-SO(2)H) and sulfonic acid (Cys-SO(3)H) forms upon oxidative stress. In terms of processing, phosphorylation at Thr-177 by MAP kinases increases the phospholipase activity of the enzyme. The phosphorylated form exhibits a greater lysophosphatidylcholine acyltransferase activity compared to the non-phosphorylated form.

It localises to the cytoplasm. The protein localises to the lysosome. The catalysed reaction is a hydroperoxide + 2 glutathione = an alcohol + glutathione disulfide + H2O. The enzyme catalyses a 1,2-diacyl-sn-glycero-3-phosphocholine + H2O = a 1-acyl-sn-glycero-3-phosphocholine + a fatty acid + H(+). It carries out the reaction a 1-acyl-sn-glycero-3-phosphocholine + an acyl-CoA = a 1,2-diacyl-sn-glycero-3-phosphocholine + CoA. It catalyses the reaction 1-hexadecanoyl-sn-glycero-3-phosphocholine + hexadecanoyl-CoA = 1,2-dihexadecanoyl-sn-glycero-3-phosphocholine + CoA. The catalysed reaction is 1,2-dihexadecanoyl-sn-glycero-3-phosphocholine + H2O = 1-hexadecanoyl-sn-glycero-3-phosphocholine + hexadecanoate + H(+). Thiol-specific peroxidase that catalyzes the reduction of hydrogen peroxide and organic hydroperoxides to water and alcohols, respectively. Can reduce H(2)O(2) and short chain organic, fatty acid, and phospholipid hydroperoxides. Also has phospholipase activity, and can therefore either reduce the oxidized sn-2 fatty acyl group of phospholipids (peroxidase activity) or hydrolyze the sn-2 ester bond of phospholipids (phospholipase activity). These activities are dependent on binding to phospholipids at acidic pH and to oxidized phospholipds at cytosolic pH. Plays a role in cell protection against oxidative stress by detoxifying peroxides and in phospholipid homeostasis. Exhibits acyl-CoA-dependent lysophospholipid acyltransferase which mediates the conversion of lysophosphatidylcholine (1-acyl-sn-glycero-3-phosphocholine or LPC) into phosphatidylcholine (1,2-diacyl-sn-glycero-3-phosphocholine or PC). Shows a clear preference for LPC as the lysophospholipid and for palmitoyl CoA as the fatty acyl substrate. This chain is Peroxiredoxin-6 (PRDX6), found in Sus scrofa (Pig).